A 429-amino-acid chain; its full sequence is Chaperone SurA (429 aa).

A signal peptide spans 1–18 (MFKRIALVCALFSGVCFA). PpiC domains are found at residues 170-271 (NLTY…KLVA) and 281-380 (ITQT…EVIA).

It is found in the periplasm. It catalyses the reaction [protein]-peptidylproline (omega=180) = [protein]-peptidylproline (omega=0). Chaperone involved in the correct folding and assembly of outer membrane proteins. Recognizes specific patterns of aromatic residues and the orientation of their side chains, which are found more frequently in integral outer membrane proteins. May act in both early periplasmic and late outer membrane-associated steps of protein maturation. The chain is Chaperone SurA from Legionella pneumophila subsp. pneumophila (strain Philadelphia 1 / ATCC 33152 / DSM 7513).